Here is a 258-residue protein sequence, read N- to C-terminus: Hydroxyacylglutathione hydrolase (258 aa).

Zn(2+) contacts are provided by H52, H54, D56, H57, H109, D126, and H164.

Belongs to the metallo-beta-lactamase superfamily. Glyoxalase II family. As to quaternary structure, monomer. Zn(2+) is required as a cofactor.

The enzyme catalyses an S-(2-hydroxyacyl)glutathione + H2O = a 2-hydroxy carboxylate + glutathione + H(+). The protein operates within secondary metabolite metabolism; methylglyoxal degradation; (R)-lactate from methylglyoxal: step 2/2. In terms of biological role, thiolesterase that catalyzes the hydrolysis of S-D-lactoyl-glutathione to form glutathione and D-lactic acid. The sequence is that of Hydroxyacylglutathione hydrolase from Xylella fastidiosa (strain M12).